The chain runs to 383 residues: F-box/kelch-repeat protein At2g22030 (383 aa).

Residues 23–71 (SLLFSSLPYDVVLNCLARVSRRYYPNLSCVSKSFQSLVRSPELAHMRSL) enclose the F-box domain. Kelch repeat units lie at residues 130–175 (KIYF…VVNG), 176–220 (KLYV…LMRY), and 269–317 (GVCV…GMVD).

The chain is F-box/kelch-repeat protein At2g22030 from Arabidopsis thaliana (Mouse-ear cress).